Reading from the N-terminus, the 338-residue chain is Fructose-1,6-bisphosphatase 1 (338 aa).

A2 is modified (N-acetylalanine). AMP-binding positions include 18 to 22 and 28 to 32; these read VMEEG and TGELT. Residues D69 and E98 each contribute to the Mg(2+) site. 113–114 contributes to the AMP binding site; the sequence is KY. 3 residues coordinate Mg(2+): D119, L121, and D122. Position 122 to 125 (122 to 125) interacts with substrate; sequence DGSS. An AMP-binding site is contributed by R141. Residue K151 is modified to N6-succinyllysine. Residues 213 to 216, 244 to 249, Y265, and 275 to 277 contribute to the substrate site; these read NEGY, RYVGSM, and KLR. Y216, Y245, and Y265 each carry phosphotyrosine. E281 contributes to the Mg(2+) binding site.

It belongs to the FBPase class 1 family. In terms of assembly, homotetramer. It depends on Mg(2+) as a cofactor. As to expression, expressed in pancreatic islets.

It catalyses the reaction beta-D-fructose 1,6-bisphosphate + H2O = beta-D-fructose 6-phosphate + phosphate. The protein operates within carbohydrate biosynthesis; gluconeogenesis. Subject to complex allosteric regulation. The enzyme can assume an active R-state, or an inactive T-state. Intermediate conformations may exist. AMP acts as an allosteric inhibitor. AMP binding affects the turnover of bound substrate and not the affinity for substrate. Fructose 2,6-bisphosphate acts as a competitive inhibitor. Fructose 2,6-bisphosphate and AMP have synergistic effects. Functionally, catalyzes the hydrolysis of fructose 1,6-bisphosphate to fructose 6-phosphate in the presence of divalent cations, acting as a rate-limiting enzyme in gluconeogenesis. Plays a role in regulating glucose sensing and insulin secretion of pancreatic beta-cells. Appears to modulate glycerol gluconeogenesis in liver. Important regulator of appetite and adiposity; increased expression of the protein in liver after nutrient excess increases circulating satiety hormones and reduces appetite-stimulating neuropeptides and thus seems to provide a feedback mechanism to limit weight gain. In Homo sapiens (Human), this protein is Fructose-1,6-bisphosphatase 1 (FBP1).